Reading from the N-terminus, the 536-residue chain is 2-isopropylmalate synthase (536 aa).

The Pyruvate carboxyltransferase domain occupies 8–269 (IIIFDTTLRD…YYNPFLGRPV (262 aa)). Mn(2+) contacts are provided by Asp-17, His-208, His-210, and Asn-244. A regulatory domain region spans residues 408–536 (RLELVQVSCG…KEKAAVTSAS (129 aa)).

The protein belongs to the alpha-IPM synthase/homocitrate synthase family. LeuA type 1 subfamily. Homodimer. The cofactor is Mn(2+).

The protein resides in the cytoplasm. It catalyses the reaction 3-methyl-2-oxobutanoate + acetyl-CoA + H2O = (2S)-2-isopropylmalate + CoA + H(+). Its pathway is amino-acid biosynthesis; L-leucine biosynthesis; L-leucine from 3-methyl-2-oxobutanoate: step 1/4. Its function is as follows. Catalyzes the condensation of the acetyl group of acetyl-CoA with 3-methyl-2-oxobutanoate (2-ketoisovalerate) to form 3-carboxy-3-hydroxy-4-methylpentanoate (2-isopropylmalate). This chain is 2-isopropylmalate synthase, found in Gloeothece citriformis (strain PCC 7424) (Cyanothece sp. (strain PCC 7424)).